The following is a 299-amino-acid chain: Regucalcin (299 aa).

An a divalent metal cation-binding site is contributed by Glu18. Positions 101, 103, and 121 each coordinate substrate. Lys144 is modified (N6-succinyllysine). Asn154 and Asp204 together coordinate a divalent metal cation. The active-site Proton donor/acceptor is the Asp204. 2 positions are modified to N6-succinyllysine: Lys244 and Lys253.

It belongs to the SMP-30/CGR1 family. As to quaternary structure, monomer. The cofactor is Zn(2+). Mn(2+) is required as a cofactor. Requires Ca(2+) as cofactor. It depends on Mg(2+) as a cofactor. In terms of tissue distribution, mainly present in the liver. Weak expression was found in the brain, lung and kidney.

The protein localises to the cytoplasm. The catalysed reaction is D-glucono-1,5-lactone + H2O = D-gluconate + H(+). It functions in the pathway cofactor biosynthesis; L-ascorbate biosynthesis via UDP-alpha-D-glucuronate pathway; L-ascorbate from UDP-alpha-D-glucuronate: step 3/4. In terms of biological role, gluconolactonase with low activity towards other sugar lactones, including gulonolactone and galactonolactone. Catalyzes a key step in ascorbic acid (vitamin C) biosynthesis. Can also hydrolyze diisopropyl phosphorofluoridate and phenylacetate (in vitro). Calcium-binding protein. Modulates Ca(2+) signaling, and Ca(2+)-dependent cellular processes and enzyme activities. The chain is Regucalcin (Rgn) from Mus musculus (Mouse).